Here is a 2579-residue protein sequence, read N- to C-terminus: Ectopic P granules protein 5 homolog (2579 aa).

Disordered regions lie at residues Met1–Gln46 and Asn92–Val132. A compositionally biased stretch (basic residues) spans Pro7–Lys23. Residues Lys24–Ser34 are compositionally biased toward basic and acidic residues. Residue Thr134 is modified to Phosphothreonine. The disordered stretch occupies residues Pro535–Glu564. The segment covering Glu555–Glu564 has biased composition (acidic residues). Residues Met1607–Lys1633 adopt a coiled-coil conformation.

It belongs to the EPG5 family. As to quaternary structure, interacts with RAN.

It is found in the cytoplasm. The protein resides in the perinuclear region. It localises to the lysosome. Functionally, involved in autophagy. May play a role in a late step of autophagy, such as clearance of autophagosomal cargo. Plays a key role in innate and adaptive immune response triggered by unmethylated cytidine-phosphate-guanosine (CpG) dinucleotides from pathogens, and mediated by the nucleotide-sensing receptor TLR9. It is necessary for the translocation of CpG dinucleotides from early endosomes to late endosomes and lysosomes, where TLR9 is located. This Homo sapiens (Human) protein is Ectopic P granules protein 5 homolog (EPG5).